We begin with the raw amino-acid sequence, 458 residues long: Exodeoxyribonuclease 7 large subunit (458 aa).

The protein belongs to the XseA family. Heterooligomer composed of large and small subunits.

It localises to the cytoplasm. The catalysed reaction is Exonucleolytic cleavage in either 5'- to 3'- or 3'- to 5'-direction to yield nucleoside 5'-phosphates.. Its function is as follows. Bidirectionally degrades single-stranded DNA into large acid-insoluble oligonucleotides, which are then degraded further into small acid-soluble oligonucleotides. In Shouchella clausii (strain KSM-K16) (Alkalihalobacillus clausii), this protein is Exodeoxyribonuclease 7 large subunit.